A 342-amino-acid polypeptide reads, in one-letter code: Nucleoid-associated protein Sbal223_1817 (342 aa).

This sequence belongs to the YejK family.

Its subcellular location is the cytoplasm. The protein resides in the nucleoid. In Shewanella baltica (strain OS223), this protein is Nucleoid-associated protein Sbal223_1817.